Consider the following 314-residue polypeptide: Glucocorticoid receptor (314 aa).

A disordered region spans residues 1–44; sequence ASAAVSAAPTEKEFPKTHSDVSSEQQNLKGQKGSNGGSMKLHTT. The tract at residues 1 to 281 is modulating; the sequence is ASAAVSAAPT…SAATGPPPKL (281 aa). Residues 10–21 show a composition bias toward basic and acidic residues; sequence TEKEFPKTHSDV. Ser-65, Ser-73, and Ser-88 each carry phosphoserine. Lys-120 participates in a covalent cross-link: Glycyl lysine isopeptide (Lys-Gly) (interchain with G-Cter in SUMO2). The residue at position 129 (Ser-129) is a Phosphoserine. Glycyl lysine isopeptide (Lys-Gly) (interchain with G-Cter in SUMO); alternate cross-links involve residues Lys-139 and Lys-155. Residues Lys-139 and Lys-155 each participate in a glycyl lysine isopeptide (Lys-Gly) (interchain with G-Cter in SUMO2); alternate cross-link. Position 266 is a phosphoserine (Ser-266). A Glycyl lysine isopeptide (Lys-Gly) (interchain with G-Cter in ubiquitin) cross-link involves residue Lys-280. Residues 282–314 form an NR C4-type zinc finger; sequence CLVCSDEASGCHYGVLTCGSCKVFFKRAVEGQH. The segment at residues 282-314 is a DNA-binding region (nuclear receptor); the sequence is CLVCSDEASGCHYGVLTCGSCKVFFKRAVEGQH.

Belongs to the nuclear hormone receptor family. NR3 subfamily. As to quaternary structure, heteromultimeric cytoplasmic complex with HSP90AA1, HSPA1A/HSPA1B, and FKBP5 or another immunophilin such as PPID, STIP1, or the immunophilin homolog PPP5C. Upon ligand binding FKBP5 dissociates from the complex and FKBP4 takes its place, thereby linking the complex to dynein and mediating transport to the nucleus, where the complex dissociates. Probably forms a complex composed of chaperones HSP90 and HSP70, co-chaperones CDC37, PPP5C, TSC1 and client protein TSC2, CDK4, AKT, RAF1 and NR3C1; this complex does not contain co-chaperones STIP1/HOP and PTGES3/p23. Directly interacts with UNC45A. Binds to DNA as a homodimer, and as heterodimer with NR3C2 or the retinoid X receptor. Binds STAT5A and STAT5B homodimers and heterodimers. Interacts with NRIP1, POU2F1, POU2F2 and TRIM28. Interacts with several coactivator complexes, including the SMARCA4 complex, CREBBP/EP300, TADA2L (Ada complex) and p160 coactivators such as NCOA2 and NCOA6. Interaction with BAG1 inhibits transactivation. Interacts with HEXIM1 and TGFB1I1. Interacts with NCOA1. Interacts with NCOA3, SMARCA4, SMARCC1, SMARCD1, and SMARCE1. Interacts with CLOCK, CRY1 and CRY2 in a ligand-dependent fashion. Interacts with CIART. Interacts with RWDD3. Interacts with UBE2I/UBC9 and this interaction is enhanced in the presence of RWDD3. Interacts with GRIP1. Interacts with NR4A3 (via nuclear receptor DNA-binding domain), represses transcription activity of NR4A3 on the POMC promoter Nur response element (NurRE). Directly interacts with PNRC2 to attract and form a complex with UPF1 and DCP1A; the interaction leads to rapid mRNA degradation. Interacts with GSK3B. Interacts with FNIP1 and FNIP2. Interacts (via C-terminus) with HNRNPU (via C-terminus). Interacts with MCM3AP. Interacts (via domain NR LBD) with HSP90AA1 and HSP90AB1. In the absence of hormonal ligand, interacts with TACC1. Interacts (via NR LBD domain) with ZNF764 (via KRAB domain); the interaction regulates transcription factor activity of NR3C1 by directing its actions toward certain biologic pathways. In terms of processing, acetylation by CLOCK reduces its binding to glucocorticoid response elements and its transcriptional activity. Increased proteasome-mediated degradation in response to glucocorticoids. Post-translationally, phosphorylated in the absence of hormone; becomes hyperphosphorylated in the presence of glucocorticoid. The Ser-65, Ser-88 and Ser-266-phosphorylated forms are mainly cytoplasmic, and the Ser-73-phosphorylated form is nuclear. Phosphorylation at Ser-73 increases transcriptional activity. Phosphorylation at Ser-65, Ser-88 and Ser-266 decreases signaling capacity. Phosphorylation at Ser-266 may protect from glucocorticoid-induced apoptosis. Phosphorylation at Ser-65 and Ser-73 is not required in regulation of chromosome segregation. May be dephosphorylated by PPP5C, attenuates NR3C1 action. In terms of processing, ubiquitinated by UBR5, leading to its degradation: UBR5 specifically recognizes and binds ligand-bound NR3C1 when it is not associated with coactivators (NCOAs). In presence of NCOAs, the UBR5-degron is not accessible, preventing its ubiquitination and degradation. Sumoylation at Lys-139 and Lys-155 negatively regulates its transcriptional activity. Heat shock increases sumoylation in a RWDD3-dependent manner.

The protein resides in the cytoplasm. It localises to the nucleus. The protein localises to the mitochondrion. Its subcellular location is the cytoskeleton. It is found in the spindle. The protein resides in the microtubule organizing center. It localises to the centrosome. The protein localises to the chromosome. Its subcellular location is the nucleoplasm. Functionally, receptor for glucocorticoids (GC). Has a dual mode of action: as a transcription factor that binds to glucocorticoid response elements (GRE), both for nuclear and mitochondrial DNA, and as a modulator of other transcription factors. Affects inflammatory responses, cellular proliferation and differentiation in target tissues. Involved in chromatin remodeling. Plays a role in rapid mRNA degradation by binding to the 5' UTR of target mRNAs and interacting with PNRC2 in a ligand-dependent manner which recruits the RNA helicase UPF1 and the mRNA-decapping enzyme DCP1A, leading to RNA decay. Could act as a coactivator for STAT5-dependent transcription upon growth hormone (GH) stimulation and could reveal an essential role of hepatic GR in the control of body growth. Mediates glucocorticoid-induced apoptosis. Promotes accurate chromosome segregation during mitosis. May act as a tumor suppressor. May play a negative role in adipogenesis through the regulation of lipolytic and antilipogenic gene expression. This is Glucocorticoid receptor (NR3C1) from Ovis aries (Sheep).